We begin with the raw amino-acid sequence, 236 residues long: MADDWESAADSEVVILPNAANNINKWEGEDDDEDVKESWEDEEEKKDEEKPTKTEVPVKPKPTRALKAKLEEEERLREAEEEKRLANLTPEEKFAEKLRVKKMQEESDMKHTLDTFGVTSISGGLESFNPESKEEFKEFGDTLSWKVAQFKESPHFPQFVEDLVRSICVNLSAADIKKVKINVELLHSEKLKLEKANTKKPIGKGKGKVSLRTENDDIDGYQKYGNDFTDDYDDFM.

The segment at 20-88 (ANNINKWEGE…AEEEKRLANL (69 aa)) is disordered. Acidic residues predominate over residues 28–46 (GEDDDEDVKESWEDEEEKK). Basic and acidic residues-rich tracts occupy residues 47–58 (DEEKPTKTEVPV) and 68–88 (AKLE…LANL).

Belongs to the eIF-3 subunit J family. In terms of assembly, component of the eukaryotic translation initiation factor 3 (eIF-3) complex. The eIF-3 complex interacts with pix.

The protein localises to the cytoplasm. Component of the eukaryotic translation initiation factor 3 (eIF-3) complex, which is involved in protein synthesis of a specialized repertoire of mRNAs and, together with other initiation factors, stimulates binding of mRNA and methionyl-tRNAi to the 40S ribosome. The eIF-3 complex specifically targets and initiates translation of a subset of mRNAs involved in cell proliferation. This chain is Eukaryotic translation initiation factor 3 subunit J, found in Drosophila willistoni (Fruit fly).